The chain runs to 723 residues: MAEYTRLHNALALIRLRNPPVNAISTTLLRDIKEGLQKAVIDHTIKAIVICGAEGKFSAGADIRGFSAPRTFGLTLGHVVDEIQRNEKPVVAAIQGMAFGGGLELALGCHYRIAHAEAQVGLPEVTLGLLPGARGTQLLPRLTGVPAALDLITSGRRILADEALKLGILDKVVNSDPVEEAIRFAQRVSDQPLESRRLCNKPIQSLPNMDSIFSEALLKMRRQHPGCLAQEACVRAVQAAVQYPYEVGIKKEEELFLYLLQSGQARALQYAFFAERKANKWSTPSGASWKTASARPVSSVGVVGLGTMGRGIVISFARARIPVIAVDSDKNQLATANKMITSVLEKEASKMQQSGHPWSGPKPRLTSSVKELGGVDLVIEAVFEEMSLKKQVFAELSAVCKPEAFLCTNTSALDVDEIASSTDRPHLVIGTHFFSPAHVMKLLEVIPSQYSSPTTIATVMNLSKKIKKIGVVVGNCFGFVGNRMLNPYYNQAYFLLEEGSKPEEVDQVLEEFGFKMGPFRVSDLAGLDVGWKSRKGQGLTGPTLLPGTPARKRGNRRYCPIPDVLCELGRFGQKTGKGWYQYDKPLGRIHKPDPWLSKFLSRYRKTHHIEPRTISQDEILERCLYSLINEAFRILGEGIAASPEHIDVVYLHGYGWPRHKGGPMFYASTVGLPTVLEKLQKYYRQNPDIPQLEPSDYLKKLASQGNPPLKEWQSLAGSPSSKL.

The tract at residues 1–282 (MAEYTRLHNA…FAERKANKWS (282 aa)) is enoyl-CoA hydratase / isomerase. Lysine 38 carries the N6-succinyllysine modification. Substrate is bound at residue glycine 101. Lysine 165 bears the N6-acetyllysine; alternate mark. Lysine 165 is modified (N6-succinyllysine; alternate). N6-acetyllysine is present on lysine 171. At lysine 219 the chain carries N6-acetyllysine; alternate. Position 219 is an N6-succinyllysine; alternate (lysine 219). Lysine 250 is subject to N6-acetyllysine. 2 positions are modified to N6-succinyllysine: lysine 280 and lysine 290. The segment at 283–572 (TPSGASWKTA…DVLCELGRFG (290 aa)) is 3-hydroxyacyl-CoA dehydrogenase. An N6-acetyllysine mark is found at lysine 346, lysine 350, and lysine 464. Lysine 532 is modified (N6-succinyllysine). Threonine 548 carries the post-translational modification Phosphothreonine. Lysine 577 bears the N6-succinyllysine mark. An N6-acetyllysine; alternate mark is found at lysine 584, lysine 591, and lysine 710. Residues lysine 584, lysine 591, and lysine 710 each carry the N6-succinyllysine; alternate modification. At serine 718 the chain carries Phosphoserine. Residues 721-723 (SKL) carry the Microbody targeting signal motif. The residue at position 722 (lysine 722) is an N6-succinyllysine.

This sequence in the N-terminal section; belongs to the enoyl-CoA hydratase/isomerase family. The protein in the C-terminal section; belongs to the 3-hydroxyacyl-CoA dehydrogenase family. In terms of assembly, monomer. Post-translationally, acetylated, leading to enhanced enzyme activity. Acetylation is enhanced by up to 80% after treatment either with trichostin A (TSA) or with nicotinamide (NAM) with highest increase on Lys-346. Acetylation and enzyme activity increased by about 1.5% on addition of fatty acids. Liver and kidney. Strongly expressed in the terminal segments of the proximal tubule. Lower amounts seen in the brain.

The protein resides in the peroxisome. It catalyses the reaction a (3S)-3-hydroxyacyl-CoA = a (2E)-enoyl-CoA + H2O. The catalysed reaction is a 4-saturated-(3S)-3-hydroxyacyl-CoA = a (3E)-enoyl-CoA + H2O. The enzyme catalyses a (3Z)-enoyl-CoA = a 4-saturated (2E)-enoyl-CoA. It carries out the reaction a (3E)-enoyl-CoA = a 4-saturated (2E)-enoyl-CoA. It catalyses the reaction a (3S)-3-hydroxyacyl-CoA + NAD(+) = a 3-oxoacyl-CoA + NADH + H(+). The catalysed reaction is (2S,3S)-3-hydroxy-2-methylbutanoyl-CoA = (2E)-2-methylbut-2-enoyl-CoA + H2O. The enzyme catalyses (3S)-hydroxyhexadecanoyl-CoA + NAD(+) = 3-oxohexadecanoyl-CoA + NADH + H(+). It carries out the reaction (3S)-hydroxyhexadecanoyl-CoA = (2E)-hexadecenoyl-CoA + H2O. It catalyses the reaction (2E)-hexadecenedioyl-CoA + H2O = (3S)-hydroxyhexadecanedioyl-CoA. The catalysed reaction is (3S)-hydroxyhexadecanedioyl-CoA + NAD(+) = 3-oxohexadecanedioyl-CoA + NADH + H(+). The enzyme catalyses (3E,5Z)-tetradecadienoyl-CoA = (2E,5Z)-tetradecadienoyl-CoA. It carries out the reaction (3E,5Z)-octadienoyl-CoA = (2E,5Z)-octadienoyl-CoA. It catalyses the reaction (3S)-hydroxydecanoyl-CoA + NAD(+) = 3-oxodecanoyl-CoA + NADH + H(+). The catalysed reaction is (3E)-decenoyl-CoA = (2E)-decenoyl-CoA. The enzyme catalyses (3Z)-hexenoyl-CoA = (2E)-hexenoyl-CoA. It carries out the reaction (3E)-hexenoyl-CoA = (2E)-hexenoyl-CoA. It catalyses the reaction (3S)-hydroxydecanoyl-CoA = (2E)-decenoyl-CoA + H2O. The catalysed reaction is (3S)-hydroxyhexanoyl-CoA = (2E)-hexenoyl-CoA + H2O. Its pathway is lipid metabolism; fatty acid beta-oxidation. With respect to regulation, enzyme activity enhanced by acetylation. Peroxisomal trifunctional enzyme possessing 2-enoyl-CoA hydratase, 3-hydroxyacyl-CoA dehydrogenase, and delta 3, delta 2-enoyl-CoA isomerase activities. Catalyzes two of the four reactions of the long chain fatty acids peroxisomal beta-oxidation pathway. Can also use branched-chain fatty acids such as 2-methyl-2E-butenoyl-CoA as a substrate, which is hydrated into (2S,3S)-3-hydroxy-2-methylbutanoyl-CoA. Optimal isomerase for 2,5 double bonds into 3,5 form isomerization in a range of enoyl-CoA species. Also able to isomerize both 3-cis and 3-trans double bonds into the 2-trans form in a range of enoyl-CoA species. With HSD17B4, catalyzes the hydration of trans-2-enoyl-CoA and the dehydrogenation of 3-hydroxyacyl-CoA, but with opposite chiral specificity. Regulates the amount of medium-chain dicarboxylic fatty acids which are essential regulators of all fatty acid oxidation pathways. Also involved in the degradation of long-chain dicarboxylic acids through peroxisomal beta-oxidation. This Homo sapiens (Human) protein is Peroxisomal bifunctional enzyme.